A 382-amino-acid chain; its full sequence is 3-phytase (382 aa).

An N-terminal signal peptide occupies residues 1–26 (MKVPKTMLLSTAAGLLLSLTATSVSA). One can recognise a BPP domain in the interval 27–361 (HYVNEEHHFK…VSWEQIAQHL (335 aa)).

The protein resides in the secreted. The enzyme catalyses 1D-myo-inositol hexakisphosphate + H2O = 1D-myo-inositol 1,2,4,5,6-pentakisphosphate + phosphate. This Bacillus subtilis (strain 168) protein is 3-phytase (phy).